Reading from the N-terminus, the 215-residue chain is Triosephosphate isomerase (215 aa).

Catalysis depends on His-82, which acts as the Electrophile. The active-site Proton acceptor is Glu-153.

This sequence belongs to the triosephosphate isomerase family. In terms of assembly, homodimer.

It carries out the reaction D-glyceraldehyde 3-phosphate = dihydroxyacetone phosphate. The protein operates within carbohydrate biosynthesis; gluconeogenesis. Its pathway is carbohydrate degradation; glycolysis; D-glyceraldehyde 3-phosphate from glycerone phosphate: step 1/1. The chain is Triosephosphate isomerase (Tpi) from Heliothis virescens (Tobacco budworm moth).